The primary structure comprises 764 residues: Nucleolar transcription factor 1 (764 aa).

Position 1 is an N-acetylmethionine (Met1). Positions 1 to 21 (MNGEADCPTDLEMAAPKGQDR) are disordered. 2 DNA-binding regions (HMG box) span residues 112 to 180 (PKKP…ARFR) and 196 to 264 (PEKP…RDYI). At Thr201 the chain carries Phosphothreonine. A phosphoserine mark is found at Ser273, Ser336, and Ser364. A DNA-binding region (HMG box 3) is located at residues 298–362 (TKPPPNSYSL…DYEVELLRFL (65 aa)). Over residues 370–379 (QQRVLGEEKM) the composition is skewed to basic and acidic residues. Residues 370–411 (QQRVLGEEKMLNINKKQTTSPASKKPSQEGGKGGSEKPKRPV) are disordered. A phosphoserine mark is found at Ser389, Ser412, Ser433, Ser435, Ser484, Ser495, Ser546, Ser584, and Ser638. DNA-binding regions (HMG box) lie at residues 407 to 475 (PKRP…GGER), 482 to 549 (PESP…SEMR), and 568 to 634 (KKPP…DLWV). Residues 456-488 (YKAREAALKAQSERKPGGEREDRGKLPESPKRA) form a disordered region. Residues 457 to 488 (KAREAALKAQSERKPGGEREDRGKLPESPKRA) are compositionally biased toward basic and acidic residues. The interval 546–576 (SEMRAPPAATNSSKKMKFQGEPKKPPMNGYQ) is disordered. The disordered stretch occupies residues 648-764 (YISNKRKNMT…SGDSSDSDSN (117 aa)). The span at 664 to 674 (PKSSRTTLQSK) shows a compositional bias: polar residues. Residues 677 to 745 (SEEDDDEEDD…DDDEDEDNES (69 aa)) show a composition bias toward acidic residues. The segment covering 746–758 (EGSSSSSSSSGDS) has biased composition (low complexity).

In terms of assembly, homodimer. Part of Pol I pre-initiation complex (PIC), in which Pol I core assembles with RRN3 and promoter-bound UTBF and SL1/TIF-IB complex. Interacts with TOP2A in the context of Pol I complex. Interacts with TBP. Interacts with TAF1A. Interacts with PHF6. Interacts with CEBPA (isoform 1 and isoform 4). Interacts with DDX11. Interacts with NOP53. Interacts with RASL11A. Interacts with DHX33. Binds to IRS1 and PIK3CA. Interacts with ALKBH2. Phosphorylated and activated by PIK3CA.

It localises to the nucleus. Its subcellular location is the nucleolus. Functionally, recognizes the ribosomal RNA gene promoter and activates transcription mediated by RNA polymerase I through cooperative interactions with the transcription factor SL1/TIF-IB complex. It binds specifically to the upstream control element. In Rattus norvegicus (Rat), this protein is Nucleolar transcription factor 1 (Ubtf).